Here is a 299-residue protein sequence, read N- to C-terminus: Hemolysin C homolog (299 aa).

2 consecutive CBS domains span residues 80-142 (MVPR…NGRL) and 145-202 (LIRK…IDDE).

The protein belongs to the UPF0053 family. Hemolysin C subfamily.

The sequence is that of Hemolysin C homolog (tlyC) from Rickettsia rickettsii (strain Sheila Smith).